The chain runs to 91 residues: YcgL domain-containing protein Sde_1339 (91 aa).

The region spanning 1–85 is the YcgL domain; that stretch reads MIVDIYRSAK…PPESYMNEIP (85 aa). Positions 72–91 are disordered; that stretch reads QMPPPPESYMNEIPNDKMPR.

The chain is YcgL domain-containing protein Sde_1339 from Saccharophagus degradans (strain 2-40 / ATCC 43961 / DSM 17024).